Here is a 762-residue protein sequence, read N- to C-terminus: Polyribonucleotide nucleotidyltransferase (762 aa).

Asp531 and Asp537 together coordinate Mg(2+). Positions 597–656 (PRVTTIKVPVDKIGEVIGPKGKVINSITEETRAQISIEDDGTVFVGATDGPSAQAAIDKI) constitute a KH domain. The S1 motif domain maps to 668–737 (GERFLGTVVK…KRGKISLVLV (70 aa)).

It belongs to the polyribonucleotide nucleotidyltransferase family. Requires Mg(2+) as cofactor.

The protein localises to the cytoplasm. It carries out the reaction RNA(n+1) + phosphate = RNA(n) + a ribonucleoside 5'-diphosphate. Its function is as follows. Involved in mRNA degradation. Catalyzes the phosphorolysis of single-stranded polyribonucleotides processively in the 3'- to 5'-direction. This is Polyribonucleotide nucleotidyltransferase from Mycobacterium ulcerans (strain Agy99).